A 189-amino-acid chain; its full sequence is Peptidyl-tRNA hydrolase (189 aa).

The active-site Proton acceptor is histidine 19. The tRNA site is built by tyrosine 64, asparagine 66, and asparagine 112.

This sequence belongs to the PTH family. Monomer.

The protein localises to the cytoplasm. It carries out the reaction an N-acyl-L-alpha-aminoacyl-tRNA + H2O = an N-acyl-L-amino acid + a tRNA + H(+). Functionally, hydrolyzes ribosome-free peptidyl-tRNAs (with 1 or more amino acids incorporated), which drop off the ribosome during protein synthesis, or as a result of ribosome stalling. Its function is as follows. Catalyzes the release of premature peptidyl moieties from peptidyl-tRNA molecules trapped in stalled 50S ribosomal subunits, and thus maintains levels of free tRNAs and 50S ribosomes. The chain is Peptidyl-tRNA hydrolase from Gluconobacter oxydans (strain 621H) (Gluconobacter suboxydans).